The chain runs to 843 residues: Protein P (843 aa).

The segment at 1–177 (MPLSYQHFRK…FCGSPYSWEQ (177 aa)) is terminal protein domain (TP). The segment at 178-346 (ELQHGRLVLQ…HCLFHIVNLI (169 aa)) is spacer. 2 disordered regions span residues 221–240 (SRLGPQPTQGQLAGLQQGGS) and 289–315 (VSTSKRHSSSGNAVELHHVPPNSSRSQ). A compositionally biased stretch (low complexity) spans 223 to 235 (LGPQPTQGQLAGL). Residues 347–690 (DDWGPCAEHG…YLNLYPVARQ (344 aa)) form a polymerase/reverse transcriptase domain (RT) region. The Reverse transcriptase domain occupies 357-600 (EHRIRTPRTP…YSLNFMGYVI (244 aa)). Residues D429, D551, and D552 each contribute to the Mg(2+) site.

The protein belongs to the hepadnaviridae P protein family.

It catalyses the reaction DNA(n) + a 2'-deoxyribonucleoside 5'-triphosphate = DNA(n+1) + diphosphate. The enzyme catalyses Endonucleolytic cleavage to 5'-phosphomonoester.. With respect to regulation, activated by host HSP70 and HSP40 in vitro to be able to bind the epsilon loop of the pgRNA. Because deletion of the RNase H region renders the protein partly chaperone-independent, the chaperones may be needed indirectly to relieve occlusion of the RNA-binding site by this domain. Inhibited by several reverse-transcriptase inhibitors: Lamivudine, Adefovir and Entecavir. In terms of biological role, multifunctional enzyme that converts the viral RNA genome into dsDNA in viral cytoplasmic capsids. This enzyme displays a DNA polymerase activity that can copy either DNA or RNA templates, and a ribonuclease H (RNase H) activity that cleaves the RNA strand of RNA-DNA heteroduplexes in a partially processive 3'- to 5'-endonucleasic mode. Neo-synthesized pregenomic RNA (pgRNA) are encapsidated together with the P protein, and reverse-transcribed inside the nucleocapsid. Initiation of reverse-transcription occurs first by binding the epsilon loop on the pgRNA genome, and is initiated by protein priming, thereby the 5'-end of (-)DNA is covalently linked to P protein. Partial (+)DNA is synthesized from the (-)DNA template and generates the relaxed circular DNA (RC-DNA) genome. After budding and infection, the RC-DNA migrates in the nucleus, and is converted into a plasmid-like covalently closed circular DNA (cccDNA). The activity of P protein does not seem to be necessary for cccDNA generation, and is presumably released from (+)DNA by host nuclear DNA repair machinery. In Homo sapiens (Human), this protein is Protein P.